Here is a 225-residue protein sequence, read N- to C-terminus: uncharacterized protein (225 aa).

Residues 181–203 (INIFVVFMFIIYLLFYIISSTVF) form a helical membrane-spanning segment.

It is found in the cell membrane. This is an uncharacterized protein from Bacillus anthracis.